The primary structure comprises 225 residues: Probable septum site-determining protein MinC (225 aa).

Belongs to the MinC family. As to quaternary structure, interacts with MinD and FtsZ.

Cell division inhibitor that blocks the formation of polar Z ring septums. Rapidly oscillates between the poles of the cell to destabilize FtsZ filaments that have formed before they mature into polar Z rings. Prevents FtsZ polymerization. In Listeria monocytogenes serotype 4b (strain CLIP80459), this protein is Probable septum site-determining protein MinC.